The sequence spans 139 residues: Protein FAM216B (139 aa).

This sequence belongs to the FAM216 family.

This Homo sapiens (Human) protein is Protein FAM216B (FAM216B).